The chain runs to 464 residues: Methionine aminopeptidase 2-2 (464 aa).

A disordered region spans residues 1 to 106 (MGAKTYEGGD…PRVPLSQLFP (106 aa)). Residues 37-53 (EDGDGEFGSDDDDDGGD) show a composition bias toward acidic residues. A compositionally biased stretch (basic residues) spans 70–86 (PKKKKRSKKKKNNKKKS). Substrate is bound at residue histidine 216. Residues aspartate 237, aspartate 248, and histidine 317 each coordinate a divalent metal cation. Histidine 325 contributes to the substrate binding site. The a divalent metal cation site is built by glutamate 350 and glutamate 445.

It belongs to the peptidase M24A family. Methionine aminopeptidase eukaryotic type 2 subfamily. The cofactor is Co(2+). Zn(2+) serves as cofactor. Mn(2+) is required as a cofactor. Requires Fe(2+) as cofactor.

It is found in the cytoplasm. The catalysed reaction is Release of N-terminal amino acids, preferentially methionine, from peptides and arylamides.. In terms of biological role, cotranslationally removes the N-terminal methionine from nascent proteins. The N-terminal methionine is often cleaved when the second residue in the primary sequence is small and uncharged (Met-Ala-, Cys, Gly, Pro, Ser, Thr, or Val). The chain is Methionine aminopeptidase 2-2 from Talaromyces stipitatus (strain ATCC 10500 / CBS 375.48 / QM 6759 / NRRL 1006) (Penicillium stipitatum).